The primary structure comprises 363 residues: MLNDTITHAERELYLTLLELAQQQPSAYEWLTRLPTWLNDIKDKANYAHAPAYQASVARLPNLTVNNVDLNSDVLTIEANLSESQRKQTMALLKQLMPWRKGPFQIGGQISSRQTVDTQDNSDTNAPILIDTEWHSDWKWQRVAPHLGNLKGRRVLDVGGGSGYHGWRMAGSGADTVIIIDPSCLFYHQFMAIRHFVGSADAHTYTHGTGRYRTHYIPVPLEALPEHSQLFDTVFSMGVLYHRQSPFEHLQQLKGQLVKGGELVLETLVIEGDANTVLVPHDRYAQMNNVYFLPSVAALIGWLEKAGFTEVRCVDVAVTSTEEQRKTEWMTYHSLADFLDPNDSSKTLEGYPAPLRATLIAKK.

Carboxy-S-adenosyl-L-methionine contacts are provided by residues K101, W134, K139, G159, 181-183 (DPS), 221-222 (LE), M237, Y241, and R356.

Belongs to the class I-like SAM-binding methyltransferase superfamily. CmoB family. As to quaternary structure, homotetramer.

It carries out the reaction carboxy-S-adenosyl-L-methionine + 5-hydroxyuridine(34) in tRNA = 5-carboxymethoxyuridine(34) in tRNA + S-adenosyl-L-homocysteine + H(+). Catalyzes carboxymethyl transfer from carboxy-S-adenosyl-L-methionine (Cx-SAM) to 5-hydroxyuridine (ho5U) to form 5-carboxymethoxyuridine (cmo5U) at position 34 in tRNAs. In Psychrobacter cryohalolentis (strain ATCC BAA-1226 / DSM 17306 / VKM B-2378 / K5), this protein is tRNA U34 carboxymethyltransferase.